Reading from the N-terminus, the 520-residue chain is 2-isopropylmalate synthase (520 aa).

The region spanning 12–274 (IRIFDTTLRD…DSAINTPRIV (263 aa)) is the Pyruvate carboxyltransferase domain. Mn(2+)-binding residues include aspartate 21, histidine 209, histidine 211, and asparagine 245. The segment at 396 to 520 (RLASMTISDV…VIAGKTAAVA (125 aa)) is regulatory domain.

It belongs to the alpha-IPM synthase/homocitrate synthase family. LeuA type 1 subfamily. As to quaternary structure, homodimer. Mn(2+) serves as cofactor.

It is found in the cytoplasm. The catalysed reaction is 3-methyl-2-oxobutanoate + acetyl-CoA + H2O = (2S)-2-isopropylmalate + CoA + H(+). The protein operates within amino-acid biosynthesis; L-leucine biosynthesis; L-leucine from 3-methyl-2-oxobutanoate: step 1/4. Catalyzes the condensation of the acetyl group of acetyl-CoA with 3-methyl-2-oxobutanoate (2-ketoisovalerate) to form 3-carboxy-3-hydroxy-4-methylpentanoate (2-isopropylmalate). The protein is 2-isopropylmalate synthase of Xanthomonas oryzae pv. oryzae (strain KACC10331 / KXO85).